The sequence spans 145 residues: Large ribosomal subunit protein uL11m (145 aa).

Belongs to the universal ribosomal protein uL11 family.

Its subcellular location is the mitochondrion. This chain is Large ribosomal subunit protein uL11m (RPL11), found in Reclinomonas americana.